A 284-amino-acid chain; its full sequence is Probable plastid-lipid-associated protein 10, chloroplastic (284 aa).

A chloroplast-targeting transit peptide spans 1–40 (MDRIASATFSCPAISLSRVCRISPFGLNIKTNHRKRFSCR).

The protein belongs to the PAP/fibrillin family.

It is found in the plastid. Its subcellular location is the chloroplast. The protein resides in the plastoglobule. The chain is Probable plastid-lipid-associated protein 10, chloroplastic (PAP10) from Arabidopsis thaliana (Mouse-ear cress).